A 653-amino-acid chain; its full sequence is MKKATTSAAAKSQGNSKMQKNANNGTAKDKKKPNLDKESNDSNSVSDMLAVTKDQEVHAFFSKLFDDDAGPSTSKKTQSGSAAAAKTADRKRRLQAEADANNNDTGKAGKLTKESEATQGARATKRKQARSLGLERTSPIQVNGAALACPLVRKSLPPGEANSCPQPPKKDPAAVNSLVKIIKAEPTEEGNNNNDEKETETIETHKADSVEEGRRVLQWILFPVQTKVFFKDFWEHTACLVQRSNPKYFQSMISFKMLDEILIRHHLDFTVNVDVTTYKNGKRETLNPEGRALPPAVWGFYSDGCSIRLLNPSTYLIRLRQVCTVLQEFFHCKVGANLYLTPPNSQGFAPHYDDIEAFVIQVEGRKRWLLYEPPKKADQLARISSGNYDQEQLGKPIIDEVLSAGDVLYFPRGAVHQAITEEQQHSLHITLSVYQQQAYANLLETLMPMVLKKAVDRSVALRRGLPLHTFQVLGNAYKGNDCGSRKQLVENVQKLVTNYLMPSEDDIDEAVDQMAKKFQHEALPPIVLPSEEVRTVHGARSDADEQGNCVCDYKFNKKTSVRLLRANILRLVTESDGSVRIYHHVDNGLDYCKYEPYFMEILPEEAKAVELLISAYPFYLTIDQLPLESSARKIEVATALWEHGLLMTEKPFK.

The segment covering 1-12 (MKKATTSAAAKS) has biased composition (low complexity). Disordered regions lie at residues 1 to 50 (MKKA…DMLA) and 65 to 137 (FDDD…LERT). Polar residues predominate over residues 13–26 (QGNSKMQKNANNGT). Ser-44 carries the post-translational modification Phosphoserine. A compositionally biased stretch (low complexity) spans 72-86 (STSKKTQSGSAAAAK). Ser-131 is modified (phosphoserine). At Thr-137 the chain carries Phosphothreonine. Residue Ser-138 is modified to Phosphoserine. The tract at residues 184–208 (AEPTEEGNNNNDEKETETIETHKAD) is disordered. Over residues 194 to 208 (NDEKETETIETHKAD) the composition is skewed to basic and acidic residues. In terms of domain architecture, JmjC spans 300–450 (FYSDGCSIRL…NLLETLMPMV (151 aa)). Positions 351, 353, and 416 each coordinate Fe cation.

Belongs to the ROX family. NO66 subfamily. The cofactor is Fe(2+).

The protein resides in the nucleus. The enzyme catalyses N(6),N(6)-dimethyl-L-lysyl(36)-[histone H3] + 2 2-oxoglutarate + 2 O2 = L-lysyl(36)-[histone H3] + 2 formaldehyde + 2 succinate + 2 CO2. Its function is as follows. Oxygenase that can act as both a histone lysine demethylase and a ribosomal histidine hydroxylase. Specifically demethylates 'Lys-4' (H3K4me) and 'Lys-36' (H3K36me) of histone H3, thereby playing a central role in histone code. This chain is Bifunctional lysine-specific demethylase and histidyl-hydroxylase NO66, found in Drosophila melanogaster (Fruit fly).